The chain runs to 259 residues: Keratin-associated protein 10-8 (259 aa).

Residues 26-243 form a 19 X 5 AA repeats of C-C-X(3) region; the sequence is HVSRVSSPST…SCQPSCCHPA (218 aa). 19 consecutive repeat copies span residues 50–54, 60–64, 65–69, 98–102, 108–112, 118–122, 123–127, 133–137, 145–149, 155–159, 165–169, 170–174, 175–179, 187–191, 197–201, 202–206, 221–225, 228–232, and 239–243.

It belongs to the KRTAP type 10 family. As to quaternary structure, interacts with hair keratins. As to expression, restricted to a narrow region of the hair fiber cuticle, lying approximately 20 cell layers above the apex of the dermal papilla of the hair root; not detected in any other tissues.

In terms of biological role, in the hair cortex, hair keratin intermediate filaments are embedded in an interfilamentous matrix, consisting of hair keratin-associated proteins (KRTAP), which are essential for the formation of a rigid and resistant hair shaft through their extensive disulfide bond cross-linking with abundant cysteine residues of hair keratins. The matrix proteins include the high-sulfur and high-glycine-tyrosine keratins. The protein is Keratin-associated protein 10-8 (KRTAP10-8) of Homo sapiens (Human).